Here is a 954-residue protein sequence, read N- to C-terminus: Isoleucine--tRNA ligase (954 aa).

Positions 58-68 (PYANGDIHIGH) match the 'HIGH' region motif. Residue Glu572 participates in L-isoleucyl-5'-AMP binding. Residues 613 to 617 (KMSKS) carry the 'KMSKS' region motif. Residue Lys616 participates in ATP binding. Residues Cys917, Cys920, Cys937, and Cys940 each coordinate Zn(2+).

It belongs to the class-I aminoacyl-tRNA synthetase family. IleS type 1 subfamily. In terms of assembly, monomer. Zn(2+) is required as a cofactor.

It localises to the cytoplasm. The enzyme catalyses tRNA(Ile) + L-isoleucine + ATP = L-isoleucyl-tRNA(Ile) + AMP + diphosphate. Its function is as follows. Catalyzes the attachment of isoleucine to tRNA(Ile). As IleRS can inadvertently accommodate and process structurally similar amino acids such as valine, to avoid such errors it has two additional distinct tRNA(Ile)-dependent editing activities. One activity is designated as 'pretransfer' editing and involves the hydrolysis of activated Val-AMP. The other activity is designated 'posttransfer' editing and involves deacylation of mischarged Val-tRNA(Ile). This chain is Isoleucine--tRNA ligase, found in Photobacterium profundum (strain SS9).